A 403-amino-acid chain; its full sequence is MATIEESLALIGRGAEEILKLDQLQARLATGKPLRVKAGFDPTAPDLHLGHTVLLNKMRQFQQLGHQVIFLIGDFTGMIGDPSGKNATRKPLSREDVLANARTYEEQVFKILDRERTEVRFNSEWFGQMSAADMIKLSAQHTVARMLERDDFAKRFGSQQPIAIHEFLYPLVQGYDSVALKADVELGGTDQKFNLLMGRGLQEHYGQAPQIVLTMPLLEGLDGVAKMSKSLGNYIGINEPAIDIVTKTMKIGDELTWRWIDLLSFDISLAEAARLKEQVAAGELHPREVKLRLARELATRFHDAATAEQAIAGWHAVVTGQGDTSLLPLQEVVVPDEGLRLAGLLTAAGLTPSNSEATRKLKERAVRIDGEVVEDPSRVFTHGFEGVIQVGKRNFARVLLVTA.

The 'HIGH' region signature appears at 42–51 (PTAPDLHLGH). Residues 226–230 (KMSKS) carry the 'KMSKS' region motif. K229 is a binding site for ATP. The S4 RNA-binding domain occupies 339-400 (LRLAGLLTAA…GKRNFARVLL (62 aa)).

This sequence belongs to the class-I aminoacyl-tRNA synthetase family. TyrS type 2 subfamily. Homodimer.

The protein resides in the cytoplasm. The enzyme catalyses tRNA(Tyr) + L-tyrosine + ATP = L-tyrosyl-tRNA(Tyr) + AMP + diphosphate + H(+). Its function is as follows. Catalyzes the attachment of tyrosine to tRNA(Tyr) in a two-step reaction: tyrosine is first activated by ATP to form Tyr-AMP and then transferred to the acceptor end of tRNA(Tyr). This chain is Tyrosine--tRNA ligase, found in Xanthomonas euvesicatoria pv. vesicatoria (strain 85-10) (Xanthomonas campestris pv. vesicatoria).